The sequence spans 148 residues: MKILLIKDVKTLGKAGEVKEVKDGYGQNFLIAKGFAKHATAEILAQHKEDERIAAENLAKEIVSLKDLATKLDKAEIVITKKLGQNGHLFGSITKDEVAHALLEQHNVEIDKKHITDKLSIKTAGKHDLDLRLGHGIHATLHVDVVGE.

It belongs to the bacterial ribosomal protein bL9 family.

Binds to the 23S rRNA. This chain is Large ribosomal subunit protein bL9, found in Sulfurimonas denitrificans (strain ATCC 33889 / DSM 1251) (Thiomicrospira denitrificans (strain ATCC 33889 / DSM 1251)).